Reading from the N-terminus, the 693-residue chain is Putative adenosylcobalamin-dependent ribonucleoside-triphosphate reductase (693 aa).

Cys90 and Cys386 form a disulfide bridge. Active-site residues include Cys375 and Glu377.

It belongs to the class II ribonucleoside-triphosphate reductase family. Adenosylcob(III)alamin serves as cofactor.

It catalyses the reaction a 2'-deoxyribonucleoside 5'-triphosphate + [thioredoxin]-disulfide + H2O = a ribonucleoside 5'-triphosphate + [thioredoxin]-dithiol. The sequence is that of Putative adenosylcobalamin-dependent ribonucleoside-triphosphate reductase (50) from Mycobacterium phage D29 (Mycobacteriophage D29).